The chain runs to 1218 residues: Mgp-operon protein 3 (1218 aa).

Residues 1–25 (MKSKLKLKRYLLFLPLLPLGTLSLA) form the signal peptide. 4 disordered regions span residues 109–129 (QESQ…SGSN), 213–245 (HFGS…GFKL), 262–353 (EPLD…AVVS), and 411–440 (QDAT…PALT). The segment covering 116–129 (NGSQSGSSDTSGSN) has biased composition (low complexity). Positions 217 to 231 (GQESSWNSQRSQKGL) are enriched in polar residues. Basic and acidic residues predominate over residues 265 to 286 (DSTKEGKGKDESSWKNSEKTTA). Residues 301-342 (AGSASSLQGNGSNSSGLKSLLRSAPVSVPPSSTSNQTLSLSN) show a composition bias toward low complexity. Positions 411 to 428 (QDATSTNLPHAAGASQTG) are enriched in polar residues. A helical membrane pass occupies residues 1121–1141 (VGSSVGILLILLILGLGIGIP). Positions 1192–1204 (NNAAPKAPVKPAA) are enriched in low complexity. Positions 1192–1218 (NNAAPKAPVKPAAPTAPRPPVQPPKKA) are disordered. Positions 1205 to 1218 (PTAPRPPVQPPKKA) are enriched in pro residues.

It localises to the cell membrane. This Mycoplasma pneumoniae (strain ATCC 29342 / M129 / Subtype 1) (Mycoplasmoides pneumoniae) protein is Mgp-operon protein 3.